The primary structure comprises 397 residues: Elongation factor Tu (397 aa).

The tr-type G domain occupies 10-206 (KPHCNIGTIG…AVDEYIPQPE (197 aa)). The interval 19 to 26 (GHIDHGKT) is G1. 19 to 26 (GHIDHGKT) contacts GTP. Threonine 26 is a binding site for Mg(2+). Residues 62 to 66 (GITIS) are G2. Residues 83–86 (DCPG) form a G3 region. Residues 83–87 (DCPGH) and 138–141 (NKCD) contribute to the GTP site. Residues 138–141 (NKCD) form a G4 region. The tract at residues 176–178 (SAF) is G5.

It belongs to the TRAFAC class translation factor GTPase superfamily. Classic translation factor GTPase family. EF-Tu/EF-1A subfamily. In terms of assembly, monomer.

It is found in the cytoplasm. The enzyme catalyses GTP + H2O = GDP + phosphate + H(+). GTP hydrolase that promotes the GTP-dependent binding of aminoacyl-tRNA to the A-site of ribosomes during protein biosynthesis. In Cutibacterium acnes (strain DSM 16379 / KPA171202) (Propionibacterium acnes), this protein is Elongation factor Tu.